Consider the following 636-residue polypeptide: MSDDTKSPHEETHGLNRRGFLGASALTGAAALVGASALGSAVVGREARAAGKGERSKAEVAPGELDEYYGFWSGGHSGEVRVLGVPSMRELMRIPVFNVDSATGWGLTNESKRVLGDSARFLNGDCHHPHISMTDGKYDGKYLFINDKANSRVARIRLDVMKCDRIVTIPNVQAIHGLRLQKVPHTRYVFCNAEFIIPHPNDGSTFDLSGDNAFTLYNAIDAETMEVAWQVIVDGNLDNTDMDYSGRFAASTCYNSEKAVDLGGMMRNERDWVVVFDIPRIEAEIKAKRFVTLGDSKVPVVDGRRKDGKDSPVTRYIPVPKNPHGLNTSPDGKYFIANGKLSPTCTMIAIERLGDLFAGKLADPRDVVVGEPELGLGPLHTTFDGRGNAYTTLFIDSQLVKWNLADAVRAYKGEKVDYIRQKLDVQYQPGHNHATLCETSEADGKWIVVLSKFSKDRFLPTGPLHPENDQLIDISGEEMKLVHDGPTFAEPHDCILARRDQIKTRKIWDRKDPFFAETVKRAEKDGIDLMKDNKVIREGNKVRVYMVSMAPSFGLTEFKVKQGDEVTVTITNLDEIEDVTHGFVMVNHGVCMEISPQQTSSITFVADKPGVHWYYCSWFCHALHMEMCGRMLVEKA.

A signal peptide (tat-type signal) is located at residues 1–49; that stretch reads MSDDTKSPHEETHGLNRRGFLGASALTGAAALVGASALGSAVVGREARA. Histidine 127, histidine 128, and histidine 176 together coordinate Cu cation. The Ca(2+) site is built by tyrosine 254, glutamate 257, methionine 265, and aspartate 271. Over residues 302–312 the composition is skewed to basic and acidic residues; sequence DGRRKDGKDSP. Residues 302-322 form a disordered region; sequence DGRRKDGKDSPVTRYIPVPKN. Asparagine 322 contacts Ca(2+). Residues histidine 324, histidine 380, and histidine 431 each contribute to the Cu cation site. Residues lysine 452 and glutamate 467 each coordinate Ca(2+). Cu cation-binding residues include histidine 492, histidine 581, cysteine 616, tryptophan 618, cysteine 620, histidine 624, and methionine 627. Residues 540-636 form a COX2-like region; the sequence is NKVRVYMVSM…MCGRMLVEKA (97 aa).

Belongs to the NosZ family. It in the C-terminal section; belongs to the cytochrome c oxidase subunit 2 family. Homodimer. Ca(2+) serves as cofactor. Cu cation is required as a cofactor. Predicted to be exported by the Tat system. The position of the signal peptide cleavage has not been experimentally proven.

It localises to the periplasm. The catalysed reaction is N2 + 2 Fe(III)-[cytochrome c] + H2O = nitrous oxide + 2 Fe(II)-[cytochrome c] + 2 H(+). Its pathway is nitrogen metabolism; nitrate reduction (denitrification); dinitrogen from nitrate: step 4/4. Nitrous-oxide reductase is part of a bacterial respiratory system which is activated under anaerobic conditions in the presence of nitrate or nitrous oxide. In Pseudomonas aeruginosa (strain ATCC 15692 / DSM 22644 / CIP 104116 / JCM 14847 / LMG 12228 / 1C / PRS 101 / PAO1), this protein is Nitrous-oxide reductase (nosZ).